We begin with the raw amino-acid sequence, 244 residues long: Small ribosomal subunit protein eS4 (244 aa).

The region spanning 43–108 (LPLLLIVRDI…NYRVLFDRKG (66 aa)) is the S4 RNA-binding domain.

Belongs to the eukaryotic ribosomal protein eS4 family.

The protein is Small ribosomal subunit protein eS4 (rps4e) of Methanocaldococcus jannaschii (strain ATCC 43067 / DSM 2661 / JAL-1 / JCM 10045 / NBRC 100440) (Methanococcus jannaschii).